Here is a 418-residue protein sequence, read N- to C-terminus: Alpha-(1-&gt;3)-arabinofuranosyltransferase (418 aa).

11 helical membrane-spanning segments follow: residues 25 to 45 (NAVAWPLAMLLMAHRFFVLAI), 81 to 101 (YLYNPGATLLLAPLGYITHFT), 102 to 122 (LARWMFIAVNLLAIVLAFGLL), 125 to 145 (LSGWALRSMVWPIAIALAMLT), 153 to 173 (IFSNINGILLLMLAIFLWCVV), 183 to 203 (VIGLAILIKPMFLPLLFLPLV), 210 to 230 (LILGILTPVIFNAVAWFLVPG), 266 to 286 (MEITWFLIFGAMVGLAVLALL), 293 to 312 (PYFWAATTTGVLLTGVFFLS), 327 to 349 (IFTLLGSRSVFHNWVAWVAAYFF), and 372 to 392 (ATVGWGLLIVVTFVSALIWFI).

The protein belongs to the glycosyltransferase 87 family.

It is found in the cell membrane. The catalysed reaction is Adds an alpha-D-arabinofuranosyl group from trans,octacis-decaprenylphospho-beta-D-arabinofuranose at the 3-O-position of an alpha-(1-&gt;5)-arabinofuranan chain attached to a beta-(1-&gt;5)-galactofuranan chain.. It functions in the pathway cell wall biogenesis; cell wall polysaccharide biosynthesis. Involved in the biosynthesis of the arabinogalactan (AG) region of the mycolylarabinogalactan-peptidoglycan (mAGP) complex, an essential component of the corynebacterial cell wall. Catalyzes the addition of an arabinofuranosyl (Araf) residue from the sugar donor beta-D-arabinofuranosyl-1-monophosphoryldecaprenol (DPA) on the C-3 of an alpha-(1-&gt;5)-linked Araf from the arabinan backbone of AG. The protein is Alpha-(1-&gt;3)-arabinofuranosyltransferase of Corynebacterium glutamicum (strain ATCC 13032 / DSM 20300 / JCM 1318 / BCRC 11384 / CCUG 27702 / LMG 3730 / NBRC 12168 / NCIMB 10025 / NRRL B-2784 / 534).